A 544-amino-acid chain; its full sequence is Inosine-5'-monophosphate dehydrogenase (544 aa).

CBS domains lie at 132–192 (FITD…PIKS) and 194–250 (MTTE…PYAS). Residues 288 to 290 (DSS) and 338 to 340 (GMG) each bind NAD(+). K(+)-binding residues include Gly340 and Gly342. Residue Ser343 coordinates IMP. Residue Cys345 coordinates K(+). Catalysis depends on Cys345, which acts as the Thioimidate intermediate. IMP contacts are provided by residues 378–380 (DGG), 401–402 (GG), and 425–429 (YRGMG). Arg458 (proton acceptor) is an active-site residue. Gln470 provides a ligand contact to IMP. K(+) contacts are provided by Glu529, Gly530, and Gly531.

This sequence belongs to the IMPDH/GMPR family. Homotetramer. K(+) is required as a cofactor.

It is found in the cytoplasm. The catalysed reaction is IMP + NAD(+) + H2O = XMP + NADH + H(+). The protein operates within purine metabolism; XMP biosynthesis via de novo pathway; XMP from IMP: step 1/1. Its activity is regulated as follows. Mycophenolic acid (MPA) is a non-competitive inhibitor that prevents formation of the closed enzyme conformation by binding to the same site as the amobile flap. In contrast, mizoribine monophosphate (MZP) is a competitive inhibitor that induces the closed conformation. MPA is a potent inhibitor of mammalian IMPDHs but a poor inhibitor of the bacterial enzymes. MZP is a more potent inhibitor of bacterial IMPDH. Functionally, catalyzes the conversion of inosine 5'-phosphate (IMP) to xanthosine 5'-phosphate (XMP), the first committed and rate-limiting step in the de novo synthesis of guanine nucleotides, and therefore plays an important role in the regulation of cell growth. The sequence is that of Inosine-5'-monophosphate dehydrogenase from Cryptococcus neoformans var. neoformans serotype D (strain JEC21 / ATCC MYA-565) (Filobasidiella neoformans).